A 451-amino-acid chain; its full sequence is MNTNEIMSTIKMIEEQKLDIRTITMGISLRDCCSFNGEESRKRIYDKITRYAQDLVRVGEEIERDYGIPIINKRISVTPISMIAESSDDKDYVEYAKTLDRAAKAVGVNLIGGFSALVHKGCTKGDKILLQSIPEALHTTDIVCSSVNVGSSKTGINMNAVKQMGHIIKDVANLSASTNGMECMKLVVFANAIEDNPFMAGAFHGVGEAECVINVGISGPGVVKASLEKVKGEPFDVVAETIKKTAFRITRAGQLVAREASKKLDVPFGIIDLSLAPTPAVGDSVARIIEEIGVEACGAPGTTAALALLNDAVKKGGIMAASHVGGLSGAFIPVSEDEGMIAAVKSGALNLEKLEAMTCVCSVGLDMIAVPGDTPAETISGIIADEAAIGVINNKTTAVRIIPAIGMGVGDSVEFGGLFGTAPVMPVSKFSSADFINRGGRIPSPIHSFKN.

It belongs to the UPF0210 family. As to quaternary structure, homodimer.

This chain is UPF0210 protein CA_C0479, found in Clostridium acetobutylicum (strain ATCC 824 / DSM 792 / JCM 1419 / IAM 19013 / LMG 5710 / NBRC 13948 / NRRL B-527 / VKM B-1787 / 2291 / W).